The primary structure comprises 304 residues: Aspartate carbamoyltransferase catalytic subunit (304 aa).

R49 and T50 together coordinate carbamoyl phosphate. K77 lines the L-aspartate pocket. Carbamoyl phosphate is bound by residues R99, H127, and Q130. The L-aspartate site is built by R160 and R211. Carbamoyl phosphate is bound by residues A252 and P253.

Belongs to the aspartate/ornithine carbamoyltransferase superfamily. ATCase family. Heterododecamer (2C3:3R2) of six catalytic PyrB chains organized as two trimers (C3), and six regulatory PyrI chains organized as three dimers (R2).

The enzyme catalyses carbamoyl phosphate + L-aspartate = N-carbamoyl-L-aspartate + phosphate + H(+). The protein operates within pyrimidine metabolism; UMP biosynthesis via de novo pathway; (S)-dihydroorotate from bicarbonate: step 2/3. Its function is as follows. Catalyzes the condensation of carbamoyl phosphate and aspartate to form carbamoyl aspartate and inorganic phosphate, the committed step in the de novo pyrimidine nucleotide biosynthesis pathway. The sequence is that of Aspartate carbamoyltransferase catalytic subunit from Bacillus cereus (strain G9842).